Consider the following 238-residue polypeptide: Protein TIFY 3A (238 aa).

Positions Glu-39–Ala-74 constitute a Tify 1 domain. The Jas 1 signature appears at Pro-101 to Thr-120. The short motif at Ala-103–Arg-110 is the Nuclear localization signal 1 element. The 36-residue stretch at Ser-125–Ala-160 folds into the Tify 2 domain. The short motif at Pro-197–Ser-222 is the Jas 2 element. A Nuclear localization signal 2 motif is present at residues Ala-199–Arg-206. Positions Lys-219 to Thr-238 are disordered.

The protein belongs to the TIFY/JAZ family. In terms of assembly, interacts with MYC2, MYB21, MYB24, AFPH2/NINJA, TIFY10A/JAZ1, TIFY10B/JAZ2, TIFY6B/JAZ3, TIFY6A/JAZ4, TIFY7/JAZ9 and TIFY9/JAZ10. Post-translationally, ubiquitinated. Targeted for degradation by the SCF(COI1) E3 ubiquitin ligase-proteasome pathway during jasmonate signaling.

It is found in the nucleus. Functionally, repressor of jasmonate (JA) responses. Targets MYC2, MYC3 and MYC4 that are JA-dependent transcription activators. The sequence is that of Protein TIFY 3A (TIFY3A) from Arabidopsis thaliana (Mouse-ear cress).